The following is a 411-amino-acid chain: MEFVKQADTEVFEAMQAEKNRQQDKIELIASENFVTKAVMDAMGSILTNKYAEGYPGKRYYGGCEHVDVVENLARDRAKELFGADHANVQPHSGAQANMAVYSAVLEPGDTVLGMNLNHGGHLTHGSPVNFSGQLYNFVDYGVDKETEQLDYDAVLEKAKEVKPKLIVAGASAYSRSINFAKFREIADAVDAYLMVDMAHIAGLVATGEHENPVPHADFVTTTTHKTLRGPRGGMILCKEEFAKKVDKAIFPGIQGGPLMHVIAAKAVSFKEALSDDFKAYSKQIVANAKLLGEALNKEGIRIVSGGTDNHLLLLDVTPLQLTGKVAEKALDDIGITTNKNTIPFDQESPFVTSGIRIGTAAVTTRGFGEEEMKEIASIISLTLKHHEDEAKLKEAAQRVQALTEKFTLYA.

(6S)-5,6,7,8-tetrahydrofolate contacts are provided by residues Leu-117 and 121-123 (GHL). Lys-226 is subject to N6-(pyridoxal phosphate)lysine. (6S)-5,6,7,8-tetrahydrofolate contacts are provided by residues Glu-241 and 349-351 (SPF).

It belongs to the SHMT family. Homodimer. Requires pyridoxal 5'-phosphate as cofactor.

It is found in the cytoplasm. The catalysed reaction is (6R)-5,10-methylene-5,6,7,8-tetrahydrofolate + glycine + H2O = (6S)-5,6,7,8-tetrahydrofolate + L-serine. Its pathway is one-carbon metabolism; tetrahydrofolate interconversion. It functions in the pathway amino-acid biosynthesis; glycine biosynthesis; glycine from L-serine: step 1/1. In terms of biological role, catalyzes the reversible interconversion of serine and glycine with tetrahydrofolate (THF) serving as the one-carbon carrier. This reaction serves as the major source of one-carbon groups required for the biosynthesis of purines, thymidylate, methionine, and other important biomolecules. Also exhibits THF-independent aldolase activity toward beta-hydroxyamino acids, producing glycine and aldehydes, via a retro-aldol mechanism. This Oceanobacillus iheyensis (strain DSM 14371 / CIP 107618 / JCM 11309 / KCTC 3954 / HTE831) protein is Serine hydroxymethyltransferase.